The chain runs to 397 residues: DNA-directed RNA polymerase subunit Rpo1C (397 aa).

This sequence belongs to the RNA polymerase beta' chain family. Part of the RNA polymerase complex. An artificial construct of the RNAP clamp domain (including part of this protein) contacts transcription elongation factors Spt4 and Spt5.

Its subcellular location is the cytoplasm. The catalysed reaction is RNA(n) + a ribonucleoside 5'-triphosphate = RNA(n+1) + diphosphate. In terms of biological role, DNA-dependent RNA polymerase (RNAP) catalyzes the transcription of DNA into RNA using the four ribonucleoside triphosphates as substrates. Forms part of the jaw domain. This is DNA-directed RNA polymerase subunit Rpo1C from Pyrococcus furiosus (strain ATCC 43587 / DSM 3638 / JCM 8422 / Vc1).